The chain runs to 329 residues: Haptoglobin (329 aa).

A glycan (N-linked (GlcNAc...) asparagine) is linked at Asn-9. One can recognise a Sushi domain in the interval 13–70 (VSLPKPPVIENGYVEHMIRYQCKPFYKLHTEGDGVYTLNSEKHWTNKAVGEKLPECEA). Disulfide bonds link Cys-34–Cys-68 and Cys-72–Cys-189. Residue Arg-84 is a propeptide. The 243-residue stretch at 85–327 (IMGGSVDAKG…VLAWVQETIA (243 aa)) folds into the Peptidase S1 domain. Asn-107 and Asn-214 each carry an N-linked (GlcNAc...) asparagine glycan. 2 disulfides stabilise this stretch: Cys-232–Cys-263 and Cys-274–Cys-304. The interval 241 to 246 (VPEKKS) is interaction with CD163.

This sequence belongs to the peptidase S1 family. Tetramer of two alpha and two beta chains; disulfide-linked. The hemoglobin/haptoglobin complex is composed of a haptoglobin dimer bound to two hemoglobin alpha-beta dimers. Interacts with CD163. Interacts with ERGIC3. In terms of tissue distribution, expressed by the liver and secreted in plasma.

It localises to the secreted. Its subcellular location is the extracellular space. Its function is as follows. As a result of hemolysis, hemoglobin is found to accumulate in the kidney and is secreted in the urine. Haptoglobin captures, and combines with free plasma hemoglobin to allow hepatic recycling of heme iron and to prevent kidney damage. Haptoglobin also acts as an antioxidant, has antibacterial activity and plays a role in modulating many aspects of the acute phase response. Hemoglobin/haptoglobin complexes are rapidly cleared by the macrophage CD163 scavenger receptor expressed on the surface of liver Kupfer cells through an endocytic lysosomal degradation pathway. The polypeptide is Haptoglobin (HP) (Canis lupus familiaris (Dog)).